Here is a 158-residue protein sequence, read N- to C-terminus: NAD(P)H-quinone oxidoreductase subunit N (158 aa).

Belongs to the complex I NdhN subunit family. In terms of assembly, NDH-1 can be composed of about 15 different subunits; different subcomplexes with different compositions have been identified which probably have different functions.

Its subcellular location is the cellular thylakoid membrane. It carries out the reaction a plastoquinone + NADH + (n+1) H(+)(in) = a plastoquinol + NAD(+) + n H(+)(out). The enzyme catalyses a plastoquinone + NADPH + (n+1) H(+)(in) = a plastoquinol + NADP(+) + n H(+)(out). NDH-1 shuttles electrons from an unknown electron donor, via FMN and iron-sulfur (Fe-S) centers, to quinones in the respiratory and/or the photosynthetic chain. The immediate electron acceptor for the enzyme in this species is believed to be plastoquinone. Couples the redox reaction to proton translocation, and thus conserves the redox energy in a proton gradient. Cyanobacterial NDH-1 also plays a role in inorganic carbon-concentration. The protein is NAD(P)H-quinone oxidoreductase subunit N of Rippkaea orientalis (strain PCC 8801 / RF-1) (Cyanothece sp. (strain PCC 8801)).